We begin with the raw amino-acid sequence, 707 residues long: Elongation factor G (707 aa).

The 287-residue stretch at 8 to 294 folds into the tr-type G domain; the sequence is ERYRNFGIIA…GVVDYLPSPL (287 aa). Residues 17–24, 92–96, and 146–149 contribute to the GTP site; these read AHIDAGKT, DTPGH, and NKMD.

This sequence belongs to the TRAFAC class translation factor GTPase superfamily. Classic translation factor GTPase family. EF-G/EF-2 subfamily.

Its subcellular location is the cytoplasm. Its function is as follows. Catalyzes the GTP-dependent ribosomal translocation step during translation elongation. During this step, the ribosome changes from the pre-translocational (PRE) to the post-translocational (POST) state as the newly formed A-site-bound peptidyl-tRNA and P-site-bound deacylated tRNA move to the P and E sites, respectively. Catalyzes the coordinated movement of the two tRNA molecules, the mRNA and conformational changes in the ribosome. This is Elongation factor G from Hyphomonas neptunium (strain ATCC 15444).